The chain runs to 668 residues: Metastasis-associated protein MTA2 (668 aa).

The 144-residue stretch at 1–144 folds into the BAH domain; the sequence is MAANMYRVGD…PVQKTLLADQ (144 aa). Residues Ser52 and Ser54 each carry the phosphoserine modification. An ELM2 domain is found at 145-256; sequence GEIRVGCKYQ…KAMSTLVPQG (112 aa). Residue Lys152 is modified to N6-acetyllysine. The SANT domain occupies 263–315; sequence DEMEEWSASEAMLFEEALEKYGKDFNDIRQDFLPWKSLASIVQFYYMWKTTDR. The GATA-type; atypical zinc-finger motif lies at 367-394; it reads CESCHTTQSAQWYAWGPPNMQCRLCASC. The segment covering 409 to 419 has biased composition (polar residues); it reads QLEGATRGTTE. Positions 409-437 are disordered; sequence QLEGATRGTTEPHSRGHLSRPEAQSLSPY. Phosphoserine is present on residues Ser433 and Ser435. Lys460 carries the post-translational modification N6-acetyllysine. Lys492 is covalently cross-linked (Glycyl lysine isopeptide (Lys-Gly) (interchain with G-Cter in SUMO2 and SUMO3); alternate). Lys492 is covalently cross-linked (Glycyl lysine isopeptide (Lys-Gly) (interchain with G-Cter in SUMO2); alternate). A Glycyl lysine isopeptide (Lys-Gly) (interchain with G-Cter in SUMO2) cross-link involves residue Lys508. Residues Lys522 and Lys531 each carry the N6-acetyllysine modification. Thr534 bears the Phosphothreonine mark. At Ser548 the chain carries Phosphoserine. Glycyl lysine isopeptide (Lys-Gly) (interchain with G-Cter in SUMO2) cross-links involve residues Lys559 and Lys595. 2 disordered regions span residues 580–599 and 647–668; these read ASGIRSSSQPAAKRQKLNPA and PPVPLPAPSHPASTNEPIVLED.

Belongs to the metastasis-associated protein family. In terms of assembly, component of the nucleosome remodeling and deacetylase (NuRD) repressor complex, composed of core proteins MTA1, MTA2, MTA3, RBBP4, RBBP7, HDAC1, HDAC2, MBD2, MBD3, and peripherally associated proteins CDK2AP1, CDK2AP2, GATAD2A, GATAD2B, CHD3, CHD4 and CHD5. The exact stoichiometry of the NuRD complex is unknown, and some subunits such as MBD2 and MBD3, GATAD2A and GATAD2B, and CHD3, CHD4 and CHD5 define mutually exclusive NuRD complexes. Interacts with CHD3. Interacts with CHD4. Interacts with GATAD2A. Interacts with HDAC7. Interacts with MBD3. Interacts with p53/TP53. Interacts with MINT. Interacts with PIMREG. Interacts with NACC2. Interacts with ERCC6. Interacts with PWWP2B. Interacts with transcription factor BCL11A. Widely expressed.

The protein resides in the nucleus. May function as a transcriptional coregulator. Acts as a component of the histone deacetylase NuRD complex which participates in the remodeling of chromatin. This Homo sapiens (Human) protein is Metastasis-associated protein MTA2 (MTA2).